The sequence spans 297 residues: Carbamate kinase (297 aa).

This sequence belongs to the carbamate kinase family.

Its subcellular location is the cytoplasm. The catalysed reaction is hydrogencarbonate + NH4(+) + ATP = carbamoyl phosphate + ADP + H2O + H(+). It carries out the reaction carbamate + ATP = carbamoyl phosphate + ADP. It catalyses the reaction hydrogencarbonate + NH4(+) = carbamate + H2O + H(+). It functions in the pathway nitrogen metabolism; (S)-allantoin degradation. Its function is as follows. Kinase involved in the anaerobic nitrogen utilization via the assimilation of allantoin. Catalyzes the transfer of a phosphate group from carbamoyl phosphate to ADP to produce ATP and leave carbamate, which spontaneously hydrolyzes to ammonia and hydrogencarbonate. This Escherichia coli (strain K12) protein is Carbamate kinase.